A 325-amino-acid polypeptide reads, in one-letter code: Formimidoylglutamase (325 aa).

Mn(2+) is bound by residues histidine 125, aspartate 155, histidine 157, aspartate 159, cysteine 246, and aspartate 248.

Belongs to the arginase family. Requires Mn(2+) as cofactor.

It catalyses the reaction N-formimidoyl-L-glutamate + H2O = formamide + L-glutamate. It participates in amino-acid degradation; L-histidine degradation into L-glutamate; L-glutamate from N-formimidoyl-L-glutamate (hydrolase route): step 1/1. Functionally, catalyzes the conversion of N-formimidoyl-L-glutamate to L-glutamate and formamide. This Ralstonia nicotianae (strain ATCC BAA-1114 / GMI1000) (Ralstonia solanacearum) protein is Formimidoylglutamase.